Consider the following 269-residue polypeptide: 4-hydroxy-tetrahydrodipicolinate reductase (269 aa).

Residues 10–15 (GANGRM), Glu-36, 99–101 (GTT), and 123–126 (AANF) contribute to the NAD(+) site. The active-site Proton donor/acceptor is the His-156. His-157 contributes to the (S)-2,3,4,5-tetrahydrodipicolinate binding site. The Proton donor role is filled by Lys-160. Residue 166–167 (GT) participates in (S)-2,3,4,5-tetrahydrodipicolinate binding.

Belongs to the DapB family.

The protein localises to the cytoplasm. The enzyme catalyses (S)-2,3,4,5-tetrahydrodipicolinate + NAD(+) + H2O = (2S,4S)-4-hydroxy-2,3,4,5-tetrahydrodipicolinate + NADH + H(+). It carries out the reaction (S)-2,3,4,5-tetrahydrodipicolinate + NADP(+) + H2O = (2S,4S)-4-hydroxy-2,3,4,5-tetrahydrodipicolinate + NADPH + H(+). Its pathway is amino-acid biosynthesis; L-lysine biosynthesis via DAP pathway; (S)-tetrahydrodipicolinate from L-aspartate: step 4/4. Functionally, catalyzes the conversion of 4-hydroxy-tetrahydrodipicolinate (HTPA) to tetrahydrodipicolinate. The sequence is that of 4-hydroxy-tetrahydrodipicolinate reductase from Neisseria meningitidis serogroup B (strain ATCC BAA-335 / MC58).